The following is a 422-amino-acid chain: Enolase (422 aa).

Residue glutamine 162 participates in (2R)-2-phosphoglycerate binding. Glutamate 204 serves as the catalytic Proton donor. Positions 241, 284, and 311 each coordinate Mg(2+). Residues lysine 336, arginine 365, serine 366, and lysine 387 each coordinate (2R)-2-phosphoglycerate. The active-site Proton acceptor is the lysine 336.

The protein belongs to the enolase family. Mg(2+) is required as a cofactor.

It is found in the cytoplasm. Its subcellular location is the secreted. The protein resides in the cell surface. The enzyme catalyses (2R)-2-phosphoglycerate = phosphoenolpyruvate + H2O. It participates in carbohydrate degradation; glycolysis; pyruvate from D-glyceraldehyde 3-phosphate: step 4/5. In terms of biological role, catalyzes the reversible conversion of 2-phosphoglycerate (2-PG) into phosphoenolpyruvate (PEP). It is essential for the degradation of carbohydrates via glycolysis. The polypeptide is Enolase (Thermus thermophilus (strain ATCC 27634 / DSM 579 / HB8)).